Reading from the N-terminus, the 212-residue chain is Uridine kinase (212 aa).

13–20 (GGSGSGKT) is a binding site for ATP.

This sequence belongs to the uridine kinase family.

The protein localises to the cytoplasm. The enzyme catalyses uridine + ATP = UMP + ADP + H(+). It catalyses the reaction cytidine + ATP = CMP + ADP + H(+). The protein operates within pyrimidine metabolism; CTP biosynthesis via salvage pathway; CTP from cytidine: step 1/3. It participates in pyrimidine metabolism; UMP biosynthesis via salvage pathway; UMP from uridine: step 1/1. In Bacillus cereus (strain ATCC 10987 / NRS 248), this protein is Uridine kinase.